Reading from the N-terminus, the 485-residue chain is Glutamyl-tRNA(Gln) amidotransferase subunit A (485 aa).

Active-site charge relay system residues include lysine 78 and serine 153. Serine 177 (acyl-ester intermediate) is an active-site residue.

Belongs to the amidase family. GatA subfamily. As to quaternary structure, heterotrimer of A, B and C subunits.

It catalyses the reaction L-glutamyl-tRNA(Gln) + L-glutamine + ATP + H2O = L-glutaminyl-tRNA(Gln) + L-glutamate + ADP + phosphate + H(+). Allows the formation of correctly charged Gln-tRNA(Gln) through the transamidation of misacylated Glu-tRNA(Gln) in organisms which lack glutaminyl-tRNA synthetase. The reaction takes place in the presence of glutamine and ATP through an activated gamma-phospho-Glu-tRNA(Gln). The chain is Glutamyl-tRNA(Gln) amidotransferase subunit A from Pelobacter propionicus (strain DSM 2379 / NBRC 103807 / OttBd1).